Reading from the N-terminus, the 211-residue chain is Large ribosomal subunit protein bL9 (211 aa).

Residues 183–211 (AAASEDEELAETAGVAPAEPSEEDDSAKA) are disordered. A compositionally biased stretch (acidic residues) spans 202–211 (PSEEDDSAKA).

It belongs to the bacterial ribosomal protein bL9 family.

In terms of biological role, binds to the 23S rRNA. The sequence is that of Large ribosomal subunit protein bL9 from Roseobacter denitrificans (strain ATCC 33942 / OCh 114) (Erythrobacter sp. (strain OCh 114)).